Consider the following 551-residue polypeptide: Eukaryotic translation initiation factor 3 subunit D-2 (551 aa).

Positions 108-152 are disordered; it reads RTRGRTGRGTPNIASLGGSTAGGATASSTKYGKGRHTRNTQNVGR. The span at 115-136 shows a compositional bias: low complexity; that stretch reads RGTPNIASLGGSTAGGATASST. Residues 290 to 304 are RNA gate; it reads QFDLLTVNETSVEPP. Residues 527 to 551 form a disordered region; the sequence is PENAFDSDRDEEEESSEPLSNSNDN.

This sequence belongs to the eIF-3 subunit D family. Component of the eukaryotic translation initiation factor 3 (eIF-3) complex. The eIF-3 complex interacts with pix.

It localises to the cytoplasm. Functionally, mRNA cap-binding component of the eukaryotic translation initiation factor 3 (eIF-3) complex, which is involved in protein synthesis of a specialized repertoire of mRNAs and, together with other initiation factors, stimulates binding of mRNA and methionyl-tRNAi to the 40S ribosome. The eIF-3 complex specifically targets and initiates translation of a subset of mRNAs involved in cell proliferation. In the eIF-3 complex, eif3d specifically recognizes and binds the 7-methylguanosine cap of a subset of mRNAs. The sequence is that of Eukaryotic translation initiation factor 3 subunit D-2 from Drosophila simulans (Fruit fly).